We begin with the raw amino-acid sequence, 1381 residues long: EH domain-containing and endocytosis protein 1 (1381 aa).

EH domains are found at residues 14-113 and 135-227; these read EQAF…NPAP and DIAK…IRLE. 2 EF-hand domains span residues 47-82 and 167-202; these read LPGQ…IAQL and LPNQ…IQLC. Asp180, Asp182, Ser184, and Glu191 together coordinate Ca(2+). Phosphothreonine is present on Thr238. A phosphoserine mark is found at Ser241 and Ser244. Phosphothreonine is present on Thr245. Residues Ser248 and Ser249 each carry the phosphoserine modification. The residue at position 251 (Thr251) is a Phosphothreonine. Residue Ser265 is modified to Phosphoserine. One can recognise an EF-hand 3 domain in the interval 276 to 311; it reads EKKQQFDAIFDSLDKQHAGSLSSAVLVPFFLSSRLN. Residues 277–366 enclose the EH 3 domain; it reads KKQQFDAIFD…NELLQSPALG (90 aa). Residues 389–535 are disordered; sequence SKPSLQDMPH…SSPVKRTAST (147 aa). Polar residues-rich tracts occupy residues 404 to 424 and 432 to 447; these read AVNT…NGSL and PSFS…TVVQ. Ser419 carries the phosphoserine modification. The segment covering 448-470 has biased composition (low complexity); sequence NNTNNSFSYDNNNGQATLQQQQP. Phosphothreonine is present on residues Thr450, Thr477, and Thr487. Over residues 477-494 the composition is skewed to polar residues; sequence THSSSGLKKFTPTSNFGQ. Phosphoserine is present on Ser495. The stretch at 593–882 forms a coiled coil; sequence GEASAQLSNA…RELSERQMNL (290 aa). Lys674 is covalently cross-linked (Glycyl lysine isopeptide (Lys-Gly) (interchain with G-Cter in ubiquitin)). A Phosphoserine modification is found at Ser848. The interval 898 to 919 is disordered; sequence SASNTDTTTKEATSRGNVHEDT. A compositionally biased stretch (basic and acidic residues) spans 905–919; sequence TTKEATSRGNVHEDT. Residues Ser931, Ser950, Ser964, Ser1008, Ser1012, and Ser1020 each carry the phosphoserine modification. Disordered regions lie at residues 933 to 1202, 1214 to 1285, and 1298 to 1322; these read LNVN…KDEF, VEED…QVSN, and SKAE…NDPI. A compositionally biased stretch (basic and acidic residues) spans 937 to 957; it reads RVKDDEEKTERTESDVFDRDV. 2 stretches are compositionally biased toward polar residues: residues 960-989 and 1005-1019; these read LGSQ…LTET and RSQS…NAPQ. Positions 1021–1036 are enriched in basic and acidic residues; the sequence is VRDDVELPETLEERDT. Polar residues-rich tracts occupy residues 1037 to 1049 and 1061 to 1073; these read INNT…TGNL and ATAS…NETT. Thr1046 carries the post-translational modification Phosphothreonine. A phosphoserine mark is found at Ser1069, Ser1087, Ser1093, Ser1095, Ser1096, and Ser1100. Positions 1093–1103 are enriched in polar residues; that stretch reads SVSSIQESPKI. Thr1111 carries the post-translational modification Phosphothreonine. Acidic residues predominate over residues 1127 to 1139; it reads SDSSSSDDDEFED. Polar residues-rich tracts occupy residues 1147 to 1164 and 1178 to 1195; these read TVKT…SSLE and TSPS…TNSI. Phosphoserine occurs at positions 1181 and 1187. Over residues 1214–1226 the composition is skewed to acidic residues; that stretch reads VEEDNGADSESEF. The segment at 1217 to 1381 is able to bind biological membranes; the sequence is DNGADSESEF…AATNFLLDSA (165 aa). Residues 1253–1285 are compositionally biased toward polar residues; the sequence is NAFTGTLTSSSNPTIPKPQVQQQSTSDPAQVSN. Thr1307 carries the post-translational modification Phosphothreonine. Lys1329 is covalently cross-linked (Glycyl lysine isopeptide (Lys-Gly) (interchain with G-Cter in ubiquitin)). The UBA domain maps to 1338-1380; that stretch reads ATTPKSLAVEELSGMGFTEEEAHNALEKCNWDLEAATNFLLDS. Residue Ser1343 is modified to Phosphoserine.

This sequence belongs to the VDP/USO1/EDE1 family. As to quaternary structure, interacts (via UBA domain) with monoubiquitin and ENT1 (via asparagine-proline-phenylalanine tripeptide motif called NPF). Interacts with PAL1 and SYP1.

The protein localises to the cytoplasm. Functionally, functions at the internalization step of the clathrin-mediated endocytosis (CME) as an early-acting scaffold protein. Requires clathrin adapter proteins, ENT1/2 and YAP1801/2, for normal spatiotemporal dynamics and viability. Binds to biological membranes in a ubiquitin-dependent manner. The chain is EH domain-containing and endocytosis protein 1 (EDE1) from Saccharomyces cerevisiae (strain ATCC 204508 / S288c) (Baker's yeast).